The following is a 421-amino-acid chain: Alpha-tubulin N-acetyltransferase 1 (421 aa).

Residues 1-190 form the N-acetyltransferase domain; sequence MEFPFDVDAL…NNFVIFEGFF (190 aa). At Lys56 the chain carries N6-acetyllysine; by autocatalysis. 124 to 137 contacts acetyl-CoA; it reads FYIHESVQRHGHGR. An N6-acetyllysine; by autocatalysis modification is found at Lys146. 160 to 169 is an acetyl-CoA binding site; that stretch reads SQKLLKFLNK. Residues 196-235 form a disordered region; it reads PPAPSLRATRHSRAAAVDPTPAAPARKLPPKRAEGDIKPY. The segment covering 209 to 221 has biased composition (low complexity); the sequence is AAAVDPTPAAPAR. Over residues 226 to 235 the composition is skewed to basic and acidic residues; it reads KRAEGDIKPY. 2 positions are modified to N6-acetyllysine; by autocatalysis: Lys233 and Lys244. The segment at 252-284 is disordered; that stretch reads PLNRAPRRATPPAHPPPRSSSLGNSPERGPLRP. 2 positions are modified to phosphoserine: Ser272 and Ser276. Position 305 is an asymmetric dimethylarginine (Arg305). Residues 306–402 are disordered; sequence LLLAADPGGS…PAQSWTVGGD (97 aa). Ser315 bears the Phosphoserine mark. Arg323 is modified (omega-N-methylarginine). Positions 342 to 354 are enriched in polar residues; the sequence is VNSSSPNTGNQDS. Over residues 355–367 the composition is skewed to basic and acidic residues; the sequence is KQGEQETKNRSAS.

The protein belongs to the acetyltransferase ATAT1 family. In terms of assembly, component of the BBSome complex. Interacts with AP2 alpha-adaptins, including AP2A2, but not with AP1 gamma-adaptin (AP1G1/AP1G2); this interaction is required for efficient alpha-tubulin acetylation, hence clathrin-coated pits are sites of microtubule acetylation. Autoacetylation strongly increases tubulin acetylation.

Its subcellular location is the cytoplasm. The protein localises to the membrane. It is found in the clathrin-coated pit. The protein resides in the cell junction. It localises to the focal adhesion. Its subcellular location is the cell projection. The protein localises to the axon. It is found in the cytoskeleton. The protein resides in the spindle. It carries out the reaction L-lysyl-[alpha-tubulin] + acetyl-CoA = N(6)-acetyl-L-lysyl-[alpha-tubulin] + CoA + H(+). Specifically acetylates 'Lys-40' in alpha-tubulin on the lumenal side of microtubules. Promotes microtubule destabilization and accelerates microtubule dynamics; this activity may be independent of acetylation activity. Acetylates alpha-tubulin with a slow enzymatic rate, due to a catalytic site that is not optimized for acetyl transfer. Enters the microtubule through each end and diffuses quickly throughout the lumen of microtubules. Acetylates only long/old microtubules because of its slow acetylation rate since it does not have time to act on dynamically unstable microtubules before the enzyme is released. Required for normal sperm flagellar function. Promotes directional cell locomotion and chemotaxis, through AP2A2-dependent acetylation of alpha-tubulin at clathrin-coated pits that are concentrated at the leading edge of migrating cells. May facilitate primary cilium assembly. In Homo sapiens (Human), this protein is Alpha-tubulin N-acetyltransferase 1.